The primary structure comprises 351 residues: Ion-translocating oxidoreductase complex subunit D (351 aa).

4 helical membrane-spanning segments follow: residues Ile-20–Gly-40, Leu-44–Leu-64, Leu-89–Ala-109, and Pro-123–Leu-143. Thr-187 is subject to FMN phosphoryl threonine. 5 helical membrane passes run Leu-215–Leu-235, Ile-244–Pro-264, Phe-267–Ala-287, Leu-301–Pro-321, and Asp-322–Thr-342.

It belongs to the NqrB/RnfD family. In terms of assembly, the complex is composed of six subunits: RnfA, RnfB, RnfC, RnfD, RnfE and RnfG. The cofactor is FMN.

Its subcellular location is the cell inner membrane. Part of a membrane-bound complex that couples electron transfer with translocation of ions across the membrane. The protein is Ion-translocating oxidoreductase complex subunit D of Pectobacterium carotovorum subsp. carotovorum (strain PC1).